We begin with the raw amino-acid sequence, 204 residues long: Urease accessory protein UreG (204 aa).

GTP is bound at residue 12–19 (GPVGSGKT).

The protein belongs to the SIMIBI class G3E GTPase family. UreG subfamily. As to quaternary structure, homodimer. UreD, UreF and UreG form a complex that acts as a GTP-hydrolysis-dependent molecular chaperone, activating the urease apoprotein by helping to assemble the nickel containing metallocenter of UreC. The UreE protein probably delivers the nickel.

The protein localises to the cytoplasm. Its function is as follows. Facilitates the functional incorporation of the urease nickel metallocenter. This process requires GTP hydrolysis, probably effectuated by UreG. The polypeptide is Urease accessory protein UreG (Hahella chejuensis (strain KCTC 2396)).